The following is a 477-amino-acid chain: MQVLHVCSEMFPLLKTGGLADVIGALPAAQIADGVDARVLLPAFPDIRRGVTDAQVVSRRDTFAGHITLLFGHYNGVGIYLIDAPHLYDRPGSPYHDTNLFAYTDNVLRFALLGWVGAEMASGLDPFWRPDVVHVHDWHAGLAPAYLAARGRPAKSVFTVHNLAYQGMFYAHHMNDIQLPWSFFNIHGLEFNGQISFLKAGLYYADHITAVSPTYAREITEPQFAYGMEGLLQQRHREGRLSGVLNGVDEKIWSPETDLLLASRYTRDTLEDKAENKSQLQIAMGLKVDDKVPLFAVVSRLTSQKGLDLVLEALPGLLEQGGQLALLGAGDPVLQEGFLAAAAEYPGQVGVQIGYHEAFSHRIMGGADVILVPSRFEPCGLTQLYGLKYGTLPLVRRTGGLADTVSDCSLENLADGVASGFVFEDSNAWSLLRAIRRAFVLWSRPSLWRFVQRQAMAMDFSWQVAAKSYRELYYRLK.

Lysine 15 serves as a coordination point for ADP-alpha-D-glucose.

This sequence belongs to the glycosyltransferase 1 family. Bacterial/plant glycogen synthase subfamily.

The enzyme catalyses [(1-&gt;4)-alpha-D-glucosyl](n) + ADP-alpha-D-glucose = [(1-&gt;4)-alpha-D-glucosyl](n+1) + ADP + H(+). It participates in glycan biosynthesis; glycogen biosynthesis. In terms of biological role, synthesizes alpha-1,4-glucan chains using ADP-glucose. The polypeptide is Glycogen synthase (Shigella flexneri).